A 387-amino-acid polypeptide reads, in one-letter code: Patatin group A-2 (387 aa).

A signal peptide spans 1–23 (MATTKSFLILIVMILATTSSTFA). In terms of domain architecture, PNPLA spans 32–230 (LSIDGGGIKG…TVADPALLSV (199 aa)). The short motif at 36-41 (GGGIKG) is the GXGXXG element. The GXSXG signature appears at 75 to 79 (GTSTG). The active-site Nucleophile is the serine 77. A glycan (N-linked (GlcNAc...) asparagine) is linked at asparagine 115. Aspartate 216 acts as the Proton acceptor in catalysis. The DGA/G motif lies at 216 to 218 (DGA). A coiled-coil region spans residues 361-385 (ETYEEALKRFAKLLSDRKKLRANKA).

This sequence belongs to the patatin family. Tuber and stolon.

It localises to the vacuole. Functionally, probable lipolytic acyl hydrolase (LAH), an activity which is thought to be involved in the response of tubers to pathogens. This chain is Patatin group A-2, found in Solanum tuberosum (Potato).